The following is a 659-amino-acid chain: Centrosomal protein of 76 kDa (659 aa).

Ser75 and Ser83 each carry phosphoserine.

It belongs to the CEP76 family. In terms of assembly, interacts with CCP110 and CEP97.

The protein resides in the cytoplasm. The protein localises to the cytoskeleton. It is found in the microtubule organizing center. It localises to the centrosome. Its subcellular location is the centriole. Its function is as follows. Centrosomal protein involved in regulation of centriole duplication. Required to limit centriole duplication to once per cell cycle by preventing centriole reduplication. The sequence is that of Centrosomal protein of 76 kDa (CEP76) from Homo sapiens (Human).